Consider the following 426-residue polypeptide: Serine--tRNA ligase (426 aa).

Residue 233-235 (TAE) participates in L-serine binding. An ATP-binding site is contributed by 264–266 (RSE). Glutamate 287 contacts L-serine. Position 351-354 (351-354 (EISS)) interacts with ATP. An L-serine-binding site is contributed by serine 387.

The protein belongs to the class-II aminoacyl-tRNA synthetase family. Type-1 seryl-tRNA synthetase subfamily. As to quaternary structure, homodimer. The tRNA molecule binds across the dimer.

The protein localises to the cytoplasm. It catalyses the reaction tRNA(Ser) + L-serine + ATP = L-seryl-tRNA(Ser) + AMP + diphosphate + H(+). It carries out the reaction tRNA(Sec) + L-serine + ATP = L-seryl-tRNA(Sec) + AMP + diphosphate + H(+). It participates in aminoacyl-tRNA biosynthesis; selenocysteinyl-tRNA(Sec) biosynthesis; L-seryl-tRNA(Sec) from L-serine and tRNA(Sec): step 1/1. Functionally, catalyzes the attachment of serine to tRNA(Ser). Is also able to aminoacylate tRNA(Sec) with serine, to form the misacylated tRNA L-seryl-tRNA(Sec), which will be further converted into selenocysteinyl-tRNA(Sec). The chain is Serine--tRNA ligase from Pseudomonas putida (strain ATCC 700007 / DSM 6899 / JCM 31910 / BCRC 17059 / LMG 24140 / F1).